The following is a 256-amino-acid chain: Thiazole synthase (256 aa).

The active-site Schiff-base intermediate with DXP is Lys-96. 1-deoxy-D-xylulose 5-phosphate-binding positions include Gly-157, 183 to 184, and 205 to 206; these read AG and NT.

This sequence belongs to the ThiG family. As to quaternary structure, homotetramer. Forms heterodimers with either ThiH or ThiS.

The protein resides in the cytoplasm. It catalyses the reaction [ThiS sulfur-carrier protein]-C-terminal-Gly-aminoethanethioate + 2-iminoacetate + 1-deoxy-D-xylulose 5-phosphate = [ThiS sulfur-carrier protein]-C-terminal Gly-Gly + 2-[(2R,5Z)-2-carboxy-4-methylthiazol-5(2H)-ylidene]ethyl phosphate + 2 H2O + H(+). The protein operates within cofactor biosynthesis; thiamine diphosphate biosynthesis. Functionally, catalyzes the rearrangement of 1-deoxy-D-xylulose 5-phosphate (DXP) to produce the thiazole phosphate moiety of thiamine. Sulfur is provided by the thiocarboxylate moiety of the carrier protein ThiS. In vitro, sulfur can be provided by H(2)S. The protein is Thiazole synthase of Bacillus anthracis.